Consider the following 122-residue polypeptide: Large ribosomal subunit protein uL14 (122 aa).

It belongs to the universal ribosomal protein uL14 family. In terms of assembly, part of the 50S ribosomal subunit. Forms a cluster with proteins L3 and L19. In the 70S ribosome, L14 and L19 interact and together make contacts with the 16S rRNA in bridges B5 and B8.

Functionally, binds to 23S rRNA. Forms part of two intersubunit bridges in the 70S ribosome. This Syntrophotalea carbinolica (strain DSM 2380 / NBRC 103641 / GraBd1) (Pelobacter carbinolicus) protein is Large ribosomal subunit protein uL14.